The sequence spans 677 residues: UvrABC system protein B (677 aa).

Positions 27–192 constitute a Helicase ATP-binding domain; sequence ANLGQGVRDQ…QRNDFDFHRG (166 aa). 40–47 contributes to the ATP binding site; that stretch reads GVTGSGKT. Positions 93–116 match the Beta-hairpin motif; that stretch reads YYDYYQPEAYVPASDTYIEKDSSI. In terms of domain architecture, Helicase C-terminal spans 432 to 594; that stretch reads QVDDLLAECR…IEPRTIRKSL (163 aa). Residues 638–673 form the UVR domain; sequence AKHIQKLEREMREAAKELEFERAATLRDRIRLLRER.

Belongs to the UvrB family. In terms of assembly, forms a heterotetramer with UvrA during the search for lesions. Interacts with UvrC in an incision complex.

It is found in the cytoplasm. Its function is as follows. The UvrABC repair system catalyzes the recognition and processing of DNA lesions. A damage recognition complex composed of 2 UvrA and 2 UvrB subunits scans DNA for abnormalities. Upon binding of the UvrA(2)B(2) complex to a putative damaged site, the DNA wraps around one UvrB monomer. DNA wrap is dependent on ATP binding by UvrB and probably causes local melting of the DNA helix, facilitating insertion of UvrB beta-hairpin between the DNA strands. Then UvrB probes one DNA strand for the presence of a lesion. If a lesion is found the UvrA subunits dissociate and the UvrB-DNA preincision complex is formed. This complex is subsequently bound by UvrC and the second UvrB is released. If no lesion is found, the DNA wraps around the other UvrB subunit that will check the other stand for damage. The sequence is that of UvrABC system protein B from Nitratidesulfovibrio vulgaris (strain DP4) (Desulfovibrio vulgaris).